A 409-amino-acid polypeptide reads, in one-letter code: Elongation factor Tu, chloroplastic (409 aa).

The tr-type G domain occupies 10-214 (KPHINIGTIG…QVDSYIPTPT (205 aa)). A G1 region spans residues 19-26 (GHVDHGKT). 19-26 (GHVDHGKT) contacts GTP. T26 is a binding site for Mg(2+). K57 is subject to N6-methyllysine. Residues 60–64 (GITIN) are G2. A G3 region spans residues 81 to 84 (DCPG). GTP-binding positions include 81–85 (DCPGH) and 136–139 (NKED). Residues 136–139 (NKED) form a G4 region. The interval 174–176 (SAL) is G5.

This sequence belongs to the TRAFAC class translation factor GTPase superfamily. Classic translation factor GTPase family. EF-Tu/EF-1A subfamily.

It localises to the plastid. It is found in the chloroplast. The catalysed reaction is GTP + H2O = GDP + phosphate + H(+). Functionally, GTP hydrolase that promotes the GTP-dependent binding of aminoacyl-tRNA to the A-site of ribosomes during protein biosynthesis. This is Elongation factor Tu, chloroplastic (tufA) from Euglena gracilis.